The following is a 25-amino-acid chain: Flagellar filament outer layer protein (25 aa).

In terms of assembly, the flagellum consists of an outer layer composed of repeating units of FlaA around a core that contains several antigenically related polypeptides.

The protein localises to the periplasmic flagellum. It is found in the periplasm. In terms of biological role, component of the outer layer of the flagella. The chain is Flagellar filament outer layer protein (flaA) from Treponema phagedenis.